The sequence spans 396 residues: Putative T-box protein 39 (396 aa).

Positions 11–192 form a DNA-binding region, T-box; sequence MAEEDRWKQW…KNSTYGNRLD (182 aa). Positions 185-215 are disordered; it reads STYGNRLDGGNKRKNTDSSEERTSKRSKNET. Basic and acidic residues predominate over residues 193–215; the sequence is GGNKRKNTDSSEERTSKRSKNET.

Its subcellular location is the nucleus. The protein is Putative T-box protein 39 (tbx-39) of Caenorhabditis elegans.